Consider the following 1960-residue polypeptide: Myosin-9 (1960 aa).

Ala-2 bears the N-acetylalanine mark. Residues 2 to 838 are mediates interaction with LIMCH1; that stretch reads AQQAADKYLY…RLFTKVKPLL (837 aa). At Lys-8 the chain carries N6-acetyllysine. A Phosphotyrosine modification is found at Tyr-11. The Myosin N-terminal SH3-like domain occupies 27-77; that stretch reads AAKKLVWVPSDKSGFEPASLKEEVGEEAIVELVENGKKVKVNKDDIQKMNP. The Myosin motor domain maps to 81–776; the sequence is SKVEDMAELT…VLAHLEEERD (696 aa). Lys-102 carries the N6-acetyllysine modification. 174 to 181 lines the ATP pocket; that stretch reads GESGAGKT. Residues Lys-299, Lys-435, and Lys-613 each carry the N6-acetyllysine modification. Ser-628 bears the Phosphoserine mark. The interval 654-676 is actin-binding; the sequence is LAKLMATLRNTNPNFVRCIIPNH. Position 754 is a phosphotyrosine (Tyr-754). The IQ domain occupies 779-808; sequence ITDVIIGFQACCRGYLARKAFAKRQQQLTA. Residues 837-1926 are a coiled coil; sequence LLQVSRQEEE…LKNKLRRGDL (1090 aa). Lys-850 is subject to N6-succinyllysine. 3 positions are modified to N6-acetyllysine: Lys-860, Lys-975, and Lys-1024. Ser-1114 is modified (phosphoserine). Residues 1117–1137 form a disordered region; it reads QEDLESERASRNKAEKQKRDL. A compositionally biased stretch (basic and acidic residues) spans 1122 to 1137; it reads SERASRNKAEKQKRDL. Lys-1234, Lys-1249, Lys-1357, Lys-1392, Lys-1404, Lys-1410, Lys-1459, and Lys-1638 each carry N6-acetyllysine. Lys-1669 is subject to N6-succinyllysine. Ser-1714 carries the post-translational modification Phosphoserine. An N6-acetyllysine mark is found at Lys-1793, Lys-1802, and Lys-1845. The disordered stretch occupies residues 1877-1918; it reads RQLEEAEEEAQRANASRRKLQRELEDATETADAMNREVSSLK. Omega-N-methylarginine is present on Arg-1923. A disordered region spans residues 1934-1960; sequence VARKGAGDCSDEEVDGKADGAEAKAAE. Ser-1943 is subject to Phosphoserine. Over residues 1948–1960 the composition is skewed to basic and acidic residues; the sequence is DGKADGAEAKAAE.

The protein belongs to the TRAFAC class myosin-kinesin ATPase superfamily. Myosin family. Myosin is a hexameric protein that consists of 2 heavy chain subunits (MHC), 2 alkali light chain subunits (MLC) and 2 regulatory light chain subunits (MLC-2). Interacts with RASIP1. Interacts with DDR1. Interacts with PDLIM2. Interacts with SVIL. Interacts with HTRA3. Interacts with Myo7a. Interacts with CFAP95. Interacts with LIMCH1; independently of the integration of MYH9 into the myosin complex. Interacts with RAB3A. Interacts with ZBED4. Interacts with S100A4; this interaction increases cell motility. ISGylated. Post-translationally, ubiquitination.

It localises to the cytoplasm. The protein localises to the cytoskeleton. Its subcellular location is the cell cortex. The protein resides in the cytoplasmic vesicle. It is found in the secretory vesicle. It localises to the cortical granule. Its function is as follows. Cellular myosin that appears to play a role in cytokinesis, cell shape, and specialized functions such as secretion and capping. Required for cortical actin clearance prior to oocyte exocytosis. Promotes cell motility in conjunction with S100A4. During cell spreading, plays an important role in cytoskeleton reorganization, focal contact formation (in the margins but not the central part of spreading cells), and lamellipodial retraction; this function is mechanically antagonized by MYH10. The chain is Myosin-9 (MYH9) from Canis lupus familiaris (Dog).